The following is a 163-amino-acid chain: Large ribosomal subunit protein uL15 (163 aa).

A compositionally biased stretch (gly residues) spans 27–37 (SGLGKTAGRGQ). The interval 27–46 (SGLGKTAGRGQKGQKSRSGV) is disordered.

This sequence belongs to the universal ribosomal protein uL15 family. Part of the 50S ribosomal subunit.

Binds to the 23S rRNA. The sequence is that of Large ribosomal subunit protein uL15 from Zymomonas mobilis subsp. mobilis (strain ATCC 31821 / ZM4 / CP4).